A 290-amino-acid polypeptide reads, in one-letter code: Membrane protein insertase YidC (290 aa).

Positions 1–19 (MKKKALLPLFLGIMVFLAG) are cleaved as a signal peptide. Cys-20 carries N-palmitoyl cysteine lipidation. Cys-20 carries S-diacylglycerol cysteine lipidation. Transmembrane regions (helical) follow at residues 56-76 (YGLA…PFML), 134-154 (MLGC…YFVL), 176-196 (PDIW…YVSS), 207-224 (GYMM…ISLS), and 229-251 (LGLY…NIYY). Residues 270–290 (HNGGSNKKGKNTQVVSKKKKK) form a disordered region.

It belongs to the OXA1/ALB3/YidC family. Type 2 subfamily.

It is found in the cell membrane. Required for the insertion and/or proper folding and/or complex formation of integral membrane proteins into the membrane. Involved in integration of membrane proteins that insert both dependently and independently of the Sec translocase complex, as well as at least some lipoproteins. In Staphylococcus aureus (strain Mu3 / ATCC 700698), this protein is Membrane protein insertase YidC.